Consider the following 212-residue polypeptide: uncharacterized protein (212 aa).

Residues glycine 53, glutamate 74, and aspartate 97 each coordinate S-adenosyl-L-methionine.

Belongs to the methyltransferase superfamily. YrrT family.

Could be a S-adenosyl-L-methionine-dependent methyltransferase. This is an uncharacterized protein from Bacillus cereus (strain ATCC 10987 / NRS 248).